The chain runs to 207 residues: Large ribosomal subunit protein uL4 (207 aa).

The segment at 47–78 (GTASSKTRAEVRGGGKKPWRQKGTGRARVGSS) is disordered. Residues 60-71 (GGKKPWRQKGTG) show a composition bias toward basic residues.

Belongs to the universal ribosomal protein uL4 family. In terms of assembly, part of the 50S ribosomal subunit.

One of the primary rRNA binding proteins, this protein initially binds near the 5'-end of the 23S rRNA. It is important during the early stages of 50S assembly. It makes multiple contacts with different domains of the 23S rRNA in the assembled 50S subunit and ribosome. Functionally, forms part of the polypeptide exit tunnel. This is Large ribosomal subunit protein uL4 from Syntrophomonas wolfei subsp. wolfei (strain DSM 2245B / Goettingen).